We begin with the raw amino-acid sequence, 443 residues long: Amino-acid acetyltransferase (443 aa).

One can recognise an N-acetyltransferase domain in the interval 296 to 435 (EQIRRATIND…KEMYNYQRRS (140 aa)).

The protein belongs to the acetyltransferase family. ArgA subfamily. As to quaternary structure, homohexamer.

The protein localises to the cytoplasm. The enzyme catalyses L-glutamate + acetyl-CoA = N-acetyl-L-glutamate + CoA + H(+). It functions in the pathway amino-acid biosynthesis; L-arginine biosynthesis; N(2)-acetyl-L-ornithine from L-glutamate: step 1/4. The sequence is that of Amino-acid acetyltransferase from Enterobacter sp. (strain 638).